Here is a 215-residue protein sequence, read N- to C-terminus: Translation initiation factor IF-3 (215 aa).

The disordered stretch occupies residues 159 to 215; the sequence is SAEVQQPPKREGRNMIMFLGPRKTPLQKDKPEQATKAERTLPIAKPPGKTAAPAAAN. Positions 184–197 are enriched in basic and acidic residues; sequence LQKDKPEQATKAER. A compositionally biased stretch (low complexity) spans 200–215; the sequence is PIAKPPGKTAAPAAAN.

The protein belongs to the IF-3 family. As to quaternary structure, monomer.

It is found in the cytoplasm. Functionally, IF-3 binds to the 30S ribosomal subunit and shifts the equilibrium between 70S ribosomes and their 50S and 30S subunits in favor of the free subunits, thus enhancing the availability of 30S subunits on which protein synthesis initiation begins. The protein is Translation initiation factor IF-3 of Synechococcus sp. (strain RCC307).